A 138-amino-acid polypeptide reads, in one-letter code: Nucleoside diphosphate kinase (138 aa).

ATP-binding residues include lysine 9, phenylalanine 57, arginine 85, threonine 91, arginine 102, and asparagine 112. Histidine 115 functions as the Pros-phosphohistidine intermediate in the catalytic mechanism.

The protein belongs to the NDK family. In terms of assembly, homotetramer. It depends on Mg(2+) as a cofactor.

Its subcellular location is the cytoplasm. The enzyme catalyses a 2'-deoxyribonucleoside 5'-diphosphate + ATP = a 2'-deoxyribonucleoside 5'-triphosphate + ADP. It catalyses the reaction a ribonucleoside 5'-diphosphate + ATP = a ribonucleoside 5'-triphosphate + ADP. Its function is as follows. Major role in the synthesis of nucleoside triphosphates other than ATP. The ATP gamma phosphate is transferred to the NDP beta phosphate via a ping-pong mechanism, using a phosphorylated active-site intermediate. The polypeptide is Nucleoside diphosphate kinase (Deinococcus deserti (strain DSM 17065 / CIP 109153 / LMG 22923 / VCD115)).